The primary structure comprises 131 residues: Sec-independent protein translocase protein TatB (131 aa).

A helical transmembrane segment spans residues 2 to 22 (FANIGWGEMLVLVMVGLVVLG). The disordered stretch occupies residues 90 to 131 (DSLFTGDFDRPTPKKPDAAGSAGPDATEQIGAGPIPFDSDAT). Positions 96-106 (DFDRPTPKKPD) are enriched in basic and acidic residues.

Belongs to the TatB family. In terms of assembly, the Tat system comprises two distinct complexes: a TatABC complex, containing multiple copies of TatA, TatB and TatC subunits, and a separate TatA complex, containing only TatA subunits. Substrates initially bind to the TatABC complex, which probably triggers association of the separate TatA complex to form the active translocon.

Its subcellular location is the cell membrane. Functionally, part of the twin-arginine translocation (Tat) system that transports large folded proteins containing a characteristic twin-arginine motif in their signal peptide across membranes. Together with TatC, TatB is part of a receptor directly interacting with Tat signal peptides. TatB may form an oligomeric binding site that transiently accommodates folded Tat precursor proteins before their translocation. This Mycobacterium bovis (strain ATCC BAA-935 / AF2122/97) protein is Sec-independent protein translocase protein TatB.